Reading from the N-terminus, the 56-residue chain is Large ribosomal subunit protein bL32 (56 aa).

Basic residues predominate over residues methionine 1–arginine 16. Residues methionine 1–serine 33 are disordered. Residues alanine 21–serine 33 show a composition bias toward polar residues.

This sequence belongs to the bacterial ribosomal protein bL32 family.

The polypeptide is Large ribosomal subunit protein bL32 (Aliivibrio fischeri (strain ATCC 700601 / ES114) (Vibrio fischeri)).